A 786-amino-acid polypeptide reads, in one-letter code: Exo-beta-D-glucosaminidase (786 aa).

Substrate-binding positions include Tyr53, 102–103 (GE), 178–179 (DE), Glu306, Glu347, and Tyr379. Glu179 (proton donor) is an active-site residue. The Nucleophile role is filled by Glu347.

It belongs to the glycosyl hydrolase 35 family. In terms of assembly, homodimer.

The protein localises to the cytoplasm. The catalysed reaction is beta-D-glucosaminyl-(1-&gt;4)-N-acetyl-D-glucosamine + H2O = D-glucosamine + N-acetyl-D-glucosamine. Its pathway is glycan degradation; chitin degradation. In terms of biological role, exo-type enzyme that specifically cleaves the non-reducing terminal glycosidic bond of chitooligosaccharides. Catalyzes the hydrolysis of GlcN-GlcNAc to glucosamine (GlcN) and N-acetylglucosamine (GlcNAc). Involved in chitin degradation. Can also hydrolyze reduced chitobiose (GlcN2OH) and chitooligosaccharides of various chain lengths. The polypeptide is Exo-beta-D-glucosaminidase (Thermococcus kodakarensis (strain ATCC BAA-918 / JCM 12380 / KOD1) (Pyrococcus kodakaraensis (strain KOD1))).